The sequence spans 340 residues: Sulfotransferase 2B1 (340 aa).

67–72 (KSGTNW) lines the 3'-phosphoadenylyl sulfate pocket. The substrate site is built by tryptophan 95 and tryptophan 100. Histidine 122 functions as the Proton acceptor in the catalytic mechanism. Residues arginine 144, serine 152, tyrosine 207, 241–246 (SAFAAM), and 271–273 (RKG) each bind 3'-phosphoadenylyl sulfate. Positions 301 to 340 (LPSFPWDRSAEDGSPDGETEPSPSPSPGLASDDPNPGSSQ) are disordered.

This sequence belongs to the sulfotransferase 1 family. In terms of tissue distribution, isoform 1 is expressed in skin and testis. Higher level of isoform 2 expressed in skin and intestine, moderate level in the kidney, low level in liver, stomach and placenta.

It localises to the cytoplasm. The protein localises to the cytosol. Its subcellular location is the microsome. It is found in the nucleus. The catalysed reaction is an alcohol + 3'-phosphoadenylyl sulfate = an alkyl sulfate + adenosine 3',5'-bisphosphate + H(+). It catalyses the reaction pregnenolone + 3'-phosphoadenylyl sulfate = pregnenolone sulfate + adenosine 3',5'-bisphosphate + H(+). The enzyme catalyses 3beta-hydroxyandrost-5-en-17-one + 3'-phosphoadenylyl sulfate = dehydroepiandrosterone 3-sulfate + adenosine 3',5'-bisphosphate + H(+). It carries out the reaction cholesterol + 3'-phosphoadenylyl sulfate = cholesterol sulfate + adenosine 3',5'-bisphosphate + H(+). Functionally, sulfotransferase that utilizes 3'-phospho-5'-adenylyl sulfate (PAPS) as sulfonate donor to catalyze the sulfate conjugation. Sulfonation increases the water solubility of most compounds, and therefore their renal excretion, but it can also result in bioactivation to form active metabolites. Sulfonates cholesterol. Catalyzes sulfation of the 3beta-hydroxyl groups of steroids, such as, pregnenolone and dehydroepiandrosterone (DHEA). Conjugates efficiently cholesterol but has a greater affinity for pregnenolone sulfation. Does not show high activity with DHEA. Plays a role in epidermal cholesterol metabolism and in the regulation of epidermal proliferation and differentiation. Prefers pregnenolone over DHEA as a substrate and does not sulfate cholesterol. The polypeptide is Sulfotransferase 2B1 (Rattus norvegicus (Rat)).